The chain runs to 744 residues: 6-phosphofructo-2-kinase/fructose-2,6-bisphosphatase (744 aa).

Disordered stretches follow at residues 1 to 23 and 213 to 245; these read MGSG…GGQL and RSLS…DGSP. Gly-2 is lipidated: N-myristoyl glycine. Positions 17-122 constitute a CBM20 domain; that stretch reads NGGGGQLYVS…GDARLALFRL (106 aa). A compositionally biased stretch (polar residues) spans 213 to 232; that stretch reads RSLSASGSFRNDSTPKAAQR. The residue at position 220 (Ser-220) is a Phosphoserine; by CPK3. Residues Ser-276 and Ser-295 each carry the phosphoserine modification. The 6-phosphofructo-2-kinase stretch occupies residues 301–549; it reads SLSASSFLID…VFFLVNTHLT (249 aa). Position 303 is a phosphoserine; by CPK3 (Ser-303). ATP is bound at residue 349–357; that stretch reads GLPARGKTF. Residues Arg-382 and Arg-406 each coordinate beta-D-fructose 6-phosphate. Asp-431 is a catalytic residue. Residues Thr-433 and Arg-439 each coordinate beta-D-fructose 6-phosphate. The active site involves Cys-460. 469–474 provides a ligand contact to ATP; that stretch reads NIRLKI. Residues Arg-496 and Tyr-500 each coordinate beta-D-fructose 6-phosphate. The segment at 550-744 is fructose-2,6-bisphosphatase; the sequence is PRPILLTRHG…VQEKRYKLMD (195 aa). Residue Arg-557 coordinates beta-D-fructose 2,6-bisphosphate. His-558 (tele-phosphohistidine intermediate) is an active-site residue. Positions 564 and 570 each coordinate beta-D-fructose 2,6-bisphosphate. The active-site Proton donor/acceptor is Glu-630. Residues Tyr-641, Arg-655, Lys-659, Tyr-670, Gln-697, and Arg-701 each contribute to the beta-D-fructose 2,6-bisphosphate site. Position 652–655 (652–655) interacts with ATP; sequence YESR. 697–701 is an ATP binding site; the sequence is QAVLR.

In the C-terminal section; belongs to the phosphoglycerate mutase family. In terms of assembly, interacts with 14-3-3 proteins; these interactions may regulate both nitrate assimilation and sucrose/starch partitioning in leaves during the diurnal cycle. Phosphorylation at Ser-220 and Ser-303 by CPK3 promotes 14-3-3 proteins binding.

Its subcellular location is the membrane. It is found in the cytoplasm. The enzyme catalyses beta-D-fructose 2,6-bisphosphate + H2O = beta-D-fructose 6-phosphate + phosphate. The catalysed reaction is beta-D-fructose 6-phosphate + ATP = beta-D-fructose 2,6-bisphosphate + ADP + H(+). With respect to regulation, 6-phosphofructo-2-kinase activity is activated by pyruvate. 6-phosphofructo-2-kinase activity is inhibited by PPi, phosphoenolpyruvate and 2-phosphoglycerate. Fructose-2,6-bisphosphatase activity is inhibited by pyruvate, fructose 1,6-bisphosphate and 6-phosphogluconate. Functionally, synthesis and degradation of fructose 2,6-bisphosphate. Regulates carbon partitioning between sucrose versus starch during the diurnal cycle. The sequence is that of 6-phosphofructo-2-kinase/fructose-2,6-bisphosphatase (FKFBP) from Arabidopsis thaliana (Mouse-ear cress).